Here is a 127-residue protein sequence, read N- to C-terminus: Small ribosomal subunit protein uS13 (127 aa).

Residues 95 to 127 (GLPLRGQRTKTNARTRRGKKGAAIGGKKKATKK) form a disordered region.

This sequence belongs to the universal ribosomal protein uS13 family. In terms of assembly, part of the 30S ribosomal subunit. Forms a loose heterodimer with protein S19. Forms two bridges to the 50S subunit in the 70S ribosome.

Located at the top of the head of the 30S subunit, it contacts several helices of the 16S rRNA. In the 70S ribosome it contacts the 23S rRNA (bridge B1a) and protein L5 of the 50S subunit (bridge B1b), connecting the 2 subunits; these bridges are implicated in subunit movement. Contacts the tRNAs in the A and P-sites. This Herpetosiphon aurantiacus (strain ATCC 23779 / DSM 785 / 114-95) protein is Small ribosomal subunit protein uS13.